The primary structure comprises 293 residues: AM-toxin biosynthesis protein 14 (293 aa).

5 consecutive transmembrane segments (helical) span residues 33 to 53 (SATA…EVYI), 73 to 93 (IAVN…ALVL), 148 to 168 (GVLA…LCVW), 183 to 203 (LVPI…LWIL), and 221 to 241 (VWCL…TPLT).

It is found in the membrane. It functions in the pathway mycotoxin biosynthesis. Part of the gene clusters that mediate the biosynthesis of AM-toxins, host-selective toxins (HSTs) causing Alternaria blotch on apple, a worldwide distributed disease. AM-toxins are cyclic depsipeptides containing the 3 residues 2-hydroxy-isovaleric acid (2-HIV), dehydroalanine, L-alanine which are common for all 3 AM-toxins I to III. The fourth precursor is L-alpha-amino-methoxyphenyl-valeric acid (L-Amv) for AM-toxin I, L-alpha-amino-phenyl-valeric acid (L-Apv) for AM-toxin II, and L-alpha-amino-hydroxyphenyl-valeric acid (L-Ahv) for AM-toxin III. AM-toxins have two target sites for affecting susceptible apple cells; they cause invagination of the plasma membrane and electrolyte loss and chloroplast disorganization. The non-ribosomal peptide synthetase AMT1 contains 4 catalytic modules and is responsible for activation of each residue in AM-toxin. The aldo-keto reductase AMT2 catalyzes the conversion of 2-keto-isovaleric acid (2-KIV) to 2-hydroxy-isovaleric acid (2-HIV), one of the precursor residues incorporated by AMT1 during AM-toxin biosynthesis, by reduction of its ketone to an alcohol. The cytochrome P450 monooxygenase AMT3 and the thioesterase AMT4 are also important for AM-toxin production, but their exact function within the AM-toxin biosynthesis are not known yet. Up to 21 proteins (including AMT1 to AMT4) are predicted to be involved in AM-toxin biosynthesis since their expression ishighly up-regulated in AM-toxin-producing cultures. The protein is AM-toxin biosynthesis protein 14 of Alternaria alternata (Alternaria rot fungus).